The chain runs to 463 residues: Phosphomannomutase/phosphoglucomutase (463 aa).

The Phosphoserine intermediate role is filled by serine 108. The Mg(2+) site is built by serine 108, aspartate 242, aspartate 244, and aspartate 246. Substrate contacts are provided by glutamate 325, serine 327, and histidine 329.

This sequence belongs to the phosphohexose mutase family. As to quaternary structure, monomer. Mg(2+) serves as cofactor.

It carries out the reaction alpha-D-mannose 1-phosphate = D-mannose 6-phosphate. The catalysed reaction is alpha-D-glucose 1-phosphate = alpha-D-glucose 6-phosphate. It functions in the pathway nucleotide-sugar biosynthesis; GDP-alpha-D-mannose biosynthesis; alpha-D-mannose 1-phosphate from D-fructose 6-phosphate: step 2/2. It participates in bacterial outer membrane biogenesis; lipopolysaccharide biosynthesis. The phosphomannomutase activity produces a precursor for alginate polymerization. The alginate layer causes a mucoid phenotype and provides a protective barrier against host immune defenses and antibiotics. Also involved in core-LPS biosynthesis due to its phosphoglucomutase activity. Essential for biofilm production. This chain is Phosphomannomutase/phosphoglucomutase (algC), found in Pseudomonas putida (strain ATCC 47054 / DSM 6125 / CFBP 8728 / NCIMB 11950 / KT2440).